A 230-amino-acid polypeptide reads, in one-letter code: Orotidine 5'-phosphate decarboxylase (230 aa).

Substrate contacts are provided by residues Asp-10, Lys-31, 58–67 (DLKLHDIPNT), Thr-117, Arg-179, Gln-188, Gly-208, and Arg-209. The active-site Proton donor is the Lys-60.

Belongs to the OMP decarboxylase family. Type 1 subfamily. Homodimer.

The catalysed reaction is orotidine 5'-phosphate + H(+) = UMP + CO2. The protein operates within pyrimidine metabolism; UMP biosynthesis via de novo pathway; UMP from orotate: step 2/2. In terms of biological role, catalyzes the decarboxylation of orotidine 5'-monophosphate (OMP) to uridine 5'-monophosphate (UMP). The sequence is that of Orotidine 5'-phosphate decarboxylase from Staphylococcus epidermidis (strain ATCC 35984 / DSM 28319 / BCRC 17069 / CCUG 31568 / BM 3577 / RP62A).